The sequence spans 263 residues: Small ribosomal subunit protein eS4 (263 aa).

Residues 42–104 (LPLIIFLRNR…TGENFRLIYD (63 aa)) enclose the S4 RNA-binding domain.

It belongs to the eukaryotic ribosomal protein eS4 family.

This chain is Small ribosomal subunit protein eS4 (RPS4), found in Cricetulus griseus (Chinese hamster).